The primary structure comprises 185 residues: Ribosome-recycling factor (185 aa).

It belongs to the RRF family.

The protein localises to the cytoplasm. In terms of biological role, responsible for the release of ribosomes from messenger RNA at the termination of protein biosynthesis. May increase the efficiency of translation by recycling ribosomes from one round of translation to another. The chain is Ribosome-recycling factor from Laribacter hongkongensis (strain HLHK9).